A 514-amino-acid chain; its full sequence is Alstonine synthase (514 aa).

The chain crosses the membrane as a helical span at residues 4–24 (PQFSCLLPAFFLLVVFLFLLI). The N-linked (GlcNAc...) asparagine glycan is linked to asparagine 428. Residue cysteine 450 coordinates heme.

Belongs to the cytochrome P450 family. Requires heme as cofactor.

The protein resides in the membrane. It catalyses the reaction tetrahydroalstonine + A + reduced [NADPH--hemoprotein reductase] + O2 = alstonine + AH2 + oxidized [NADPH--hemoprotein reductase] + 2 H2O + H(+). It functions in the pathway alkaloid biosynthesis. Its function is as follows. A cytochrome P450 monooxygenase involved in the biosynthesis of pentacyclic alkaloids natural products such as alstonine, putative antipsychotic compounds. Catalyzes the conversion of tetrahydroalstonine to alstonine. No oxidative activity towards ajmalicine. In Alstonia scholaris (Dogbane), this protein is Alstonine synthase.